The following is a 152-amino-acid chain: MGKRVQLVLNEDVRKLGYSGDLVEVAPGYARNYLIPKGIAYRATPGVLKQIEHRKAEELKRLEGIKDEAAKQKVALQTIGTFRIEQKAGEEDMLFGRVTSPDVAELIANISGFEIDKRGIDIPDIRKLGTYSVDIKLHPEVIATVKVEVVPE.

Belongs to the bacterial ribosomal protein bL9 family.

Functionally, binds to the 23S rRNA. This Acaryochloris marina (strain MBIC 11017) protein is Large ribosomal subunit protein bL9.